A 94-amino-acid polypeptide reads, in one-letter code: uncharacterized protein (94 aa).

Residues 1–22 are disordered; sequence MATLQQAQQQNNQLTQQNNQLT. The stretch at 1 to 77 forms a coiled coil; it reads MATLQQAQQQ…NRLHSENHRL (77 aa).

This is an uncharacterized protein from Acheta domesticus (House cricket).